Reading from the N-terminus, the 253-residue chain is tRNA pseudouridine synthase A (253 aa).

The Nucleophile role is filled by Asp53. Residue Tyr112 participates in substrate binding.

It belongs to the tRNA pseudouridine synthase TruA family. In terms of assembly, homodimer.

It catalyses the reaction uridine(38/39/40) in tRNA = pseudouridine(38/39/40) in tRNA. Formation of pseudouridine at positions 38, 39 and 40 in the anticodon stem and loop of transfer RNAs. The protein is tRNA pseudouridine synthase A of Lactococcus lactis subsp. cremoris (strain MG1363).